A 283-amino-acid polypeptide reads, in one-letter code: 4-diphosphocytidyl-2-C-methyl-D-erythritol kinase (283 aa).

Lys10 is an active-site residue. An ATP-binding site is contributed by 95 to 105 (PVAAGLGGGSS). Residue Asp137 is part of the active site.

This sequence belongs to the GHMP kinase family. IspE subfamily.

The catalysed reaction is 4-CDP-2-C-methyl-D-erythritol + ATP = 4-CDP-2-C-methyl-D-erythritol 2-phosphate + ADP + H(+). It participates in isoprenoid biosynthesis; isopentenyl diphosphate biosynthesis via DXP pathway; isopentenyl diphosphate from 1-deoxy-D-xylulose 5-phosphate: step 3/6. In terms of biological role, catalyzes the phosphorylation of the position 2 hydroxy group of 4-diphosphocytidyl-2C-methyl-D-erythritol. The polypeptide is 4-diphosphocytidyl-2-C-methyl-D-erythritol kinase (Pediococcus pentosaceus (strain ATCC 25745 / CCUG 21536 / LMG 10740 / 183-1w)).